The primary structure comprises 182 residues: Ribosome-recycling factor (182 aa).

The protein belongs to the RRF family.

It is found in the cytoplasm. Functionally, responsible for the release of ribosomes from messenger RNA at the termination of protein biosynthesis. May increase the efficiency of translation by recycling ribosomes from one round of translation to another. This Prochlorococcus marinus (strain MIT 9215) protein is Ribosome-recycling factor.